Consider the following 1081-residue polypeptide: FHF complex subunit HOOK-interacting protein 1A (1081 aa).

Disordered stretches follow at residues 474–496 (SEEQ…PPPA), 544–623 (PETF…DPPK), 658–770 (EKDT…ENEP), and 863–883 (EAGS…RHPV). The span at 486-496 (PSSPSPPPPPA) shows a compositional bias: pro residues. The span at 553 to 564 (EESRENSGHPEA) shows a compositional bias: basic and acidic residues. Residues 567 to 576 (PQQSVRTSGQ) are compositionally biased toward polar residues. The segment covering 680 to 707 (EPLEDTSEQQEDTSEQLEDTSELQEDTA) has biased composition (acidic residues). Polar residues-rich tracts occupy residues 727–738 (EAQSLPTSNGPL) and 746–762 (ESQP…NTFS).

It belongs to the FHIP family. In terms of assembly, may be a component of the FTS/Hook/FHIP complex (FHF complex), composed of AKTIP/FTS, FHIP1B, and one or more members of the Hook family of proteins HOOK1, HOOK2, and HOOK3. May interact directly with AKTIP/FTS.

Its function is as follows. Probable component of the FTS/Hook/FHIP complex (FHF complex). FHF complex promotes the distribution of AP-4 complex to the perinuclear area of the cell. The chain is FHF complex subunit HOOK-interacting protein 1A from Mus musculus (Mouse).